Reading from the N-terminus, the 246-residue chain is 4-hydroxy-tetrahydrodipicolinate reductase (246 aa).

Gly-7 to Met-12 contributes to the NAD(+) binding site. Arg-34 contributes to the NADP(+) binding site. NAD(+)-binding positions include Ala-76–Thr-78 and Cys-102–Thr-105. His-135 serves as the catalytic Proton donor/acceptor. Position 136 (His-136) interacts with (S)-2,3,4,5-tetrahydrodipicolinate. Catalysis depends on Lys-139, which acts as the Proton donor. Gly-145–Thr-146 lines the (S)-2,3,4,5-tetrahydrodipicolinate pocket.

This sequence belongs to the DapB family.

Its subcellular location is the cytoplasm. The catalysed reaction is (S)-2,3,4,5-tetrahydrodipicolinate + NAD(+) + H2O = (2S,4S)-4-hydroxy-2,3,4,5-tetrahydrodipicolinate + NADH + H(+). It carries out the reaction (S)-2,3,4,5-tetrahydrodipicolinate + NADP(+) + H2O = (2S,4S)-4-hydroxy-2,3,4,5-tetrahydrodipicolinate + NADPH + H(+). Its pathway is amino-acid biosynthesis; L-lysine biosynthesis via DAP pathway; (S)-tetrahydrodipicolinate from L-aspartate: step 4/4. In terms of biological role, catalyzes the conversion of 4-hydroxy-tetrahydrodipicolinate (HTPA) to tetrahydrodipicolinate. This is 4-hydroxy-tetrahydrodipicolinate reductase from Chlamydia felis (strain Fe/C-56) (Chlamydophila felis).